Consider the following 281-residue polypeptide: MSSYQNHKALAELTLGKPTAYCDHYDATLLQAVPRSMNREPLGLYPDNLPFHGADIWTLYELSWLNSNGLPQVAVGEISLNADSINLIESKSFKLYLNSFNQTIFADKESVRMTLQRDLAACAQGNVSVALYDLDEITGQPISNFNGECLDKQDIRIDSYEFNADYLQGAAGKDHVEESLVSHLLKSNCLITHQPDWGSVQIHYRGPQIDHEALLRYLVSFRHHNEFHEQCVERIFNDIMRFCQPETLTVYARYTRRGGLDINPWRSNTDFVPLTGRLARQ.

A substrate-binding site is contributed by 88–90 (IES). 90 to 91 (SK) provides a ligand contact to NADPH. The Thioimide intermediate role is filled by cysteine 189. Aspartate 196 functions as the Proton donor in the catalytic mechanism. 228–229 (HE) contacts substrate. NADPH is bound at residue 257-258 (RG).

This sequence belongs to the GTP cyclohydrolase I family. QueF type 2 subfamily. In terms of assembly, homodimer.

It is found in the cytoplasm. The catalysed reaction is 7-aminomethyl-7-carbaguanine + 2 NADP(+) = 7-cyano-7-deazaguanine + 2 NADPH + 3 H(+). It functions in the pathway tRNA modification; tRNA-queuosine biosynthesis. In terms of biological role, catalyzes the NADPH-dependent reduction of 7-cyano-7-deazaguanine (preQ0) to 7-aminomethyl-7-deazaguanine (preQ1). In Yersinia pseudotuberculosis serotype O:1b (strain IP 31758), this protein is NADPH-dependent 7-cyano-7-deazaguanine reductase.